We begin with the raw amino-acid sequence, 143 residues long: Transcriptional regulator MraZ (143 aa).

SpoVT-AbrB domains follow at residues 5 to 47 (EYRH…PQVE) and 76 to 119 (ATEC…SKEL).

The protein belongs to the MraZ family. As to quaternary structure, forms oligomers.

The protein resides in the cytoplasm. Its subcellular location is the nucleoid. In Halalkalibacterium halodurans (strain ATCC BAA-125 / DSM 18197 / FERM 7344 / JCM 9153 / C-125) (Bacillus halodurans), this protein is Transcriptional regulator MraZ.